The primary structure comprises 238 residues: Pyridoxine 5'-phosphate synthase (238 aa).

Asn9 is a binding site for 3-amino-2-oxopropyl phosphate. A 1-deoxy-D-xylulose 5-phosphate-binding site is contributed by 11-12 (DH). Residue Arg20 coordinates 3-amino-2-oxopropyl phosphate. Residue His45 is the Proton acceptor of the active site. Arg47 and His52 together coordinate 1-deoxy-D-xylulose 5-phosphate. Catalysis depends on Glu72, which acts as the Proton acceptor. Thr102 serves as a coordination point for 1-deoxy-D-xylulose 5-phosphate. The Proton donor role is filled by His189. Residues Gly190 and 211-212 (GH) each bind 3-amino-2-oxopropyl phosphate.

This sequence belongs to the PNP synthase family. Homooctamer; tetramer of dimers.

Its subcellular location is the cytoplasm. The catalysed reaction is 3-amino-2-oxopropyl phosphate + 1-deoxy-D-xylulose 5-phosphate = pyridoxine 5'-phosphate + phosphate + 2 H2O + H(+). It participates in cofactor biosynthesis; pyridoxine 5'-phosphate biosynthesis; pyridoxine 5'-phosphate from D-erythrose 4-phosphate: step 5/5. Functionally, catalyzes the complicated ring closure reaction between the two acyclic compounds 1-deoxy-D-xylulose-5-phosphate (DXP) and 3-amino-2-oxopropyl phosphate (1-amino-acetone-3-phosphate or AAP) to form pyridoxine 5'-phosphate (PNP) and inorganic phosphate. The sequence is that of Pyridoxine 5'-phosphate synthase from Ehrlichia ruminantium (strain Gardel).